Reading from the N-terminus, the 134-residue chain is Replication enhancer protein (134 aa).

This sequence belongs to the geminiviridae replication enhancer protein family. As to quaternary structure, homooligomer. Interacts with the replication-associated protein (REP). Interacts with host proliferating cell nuclear antigen (PCNA). Interacts with host retinoblastoma-related protein 1 (RBR1), and may thereby deregulate the host cell cycle. Oligomerization and interaction with PCNA are necessary for optimal replication enhancement.

Its function is as follows. Increases viral DNA accumulation. Enhances infectivity and symptom expression. This Nicotiana tabacum (Common tobacco) protein is Replication enhancer protein.